Consider the following 80-residue polypeptide: Large ribosomal subunit protein uL24 (80 aa).

It belongs to the universal ribosomal protein uL24 family. As to quaternary structure, part of the 50S ribosomal subunit.

Its function is as follows. One of two assembly initiator proteins, it binds directly to the 5'-end of the 23S rRNA, where it nucleates assembly of the 50S subunit. One of the proteins that surrounds the polypeptide exit tunnel on the outside of the subunit. The sequence is that of Large ribosomal subunit protein uL24 from Chlorobium phaeobacteroides (strain DSM 266 / SMG 266 / 2430).